We begin with the raw amino-acid sequence, 429 residues long: DNA dC-&gt;dU-editing enzyme APOBEC3 (429 aa).

CMP/dCMP-type deaminase domains are found at residues 38 to 154 (DRKD…AQVA) and 238 to 357 (EEEF…LCSL). Residue histidine 71 coordinates Zn(2+). Catalysis depends on glutamate 73, which acts as the Proton donor. The Zn(2+) site is built by cysteine 105, cysteine 108, histidine 288, cysteine 316, and cysteine 319.

This sequence belongs to the cytidine and deoxycytidylate deaminase family. As to quaternary structure, homodimer. Zn(2+) is required as a cofactor.

Its subcellular location is the cytoplasm. The catalysed reaction is a 2'-deoxycytidine in single-stranded DNA + H2O + H(+) = a 2'-deoxyuridine in single-stranded DNA + NH4(+). DNA deaminase (cytidine deaminase) which acts as an inhibitor of retrovirus replication and retrotransposon mobility via deaminase-dependent and -independent mechanisms. Selectively targets single-stranded DNA and does not deaminate double-stranded DNA or single- or double-stranded RNA. This is DNA dC-&gt;dU-editing enzyme APOBEC3 (Apobec3) from Rattus norvegicus (Rat).